A 150-amino-acid chain; its full sequence is Large ribosomal subunit protein bL9 (150 aa).

The protein belongs to the bacterial ribosomal protein bL9 family.

In terms of biological role, binds to the 23S rRNA. The sequence is that of Large ribosomal subunit protein bL9 from Arthrobacter sp. (strain FB24).